Here is a 370-residue protein sequence, read N- to C-terminus: 1-propanol dehydrogenase PduQ (370 aa).

This sequence belongs to the iron-containing alcohol dehydrogenase family. In terms of assembly, interacts with PduP, probably via the N-terminus of PduQ. The cofactor is Fe cation.

It localises to the bacterial microcompartment. It catalyses the reaction 1-propanol + NAD(+) = propanal + NADH + H(+). The protein operates within polyol metabolism; 1,2-propanediol degradation. With respect to regulation, enzyme is oxygen sensitive. In terms of biological role, an iron-dependent alcohol dehydrogenase required for optimal 1,2-propanediol (1,2-PD) degradation. NAD(+) and NADH are regenerated internally within the bacterial microcompartment (BMC) dedicated to 1,2-PD degradation by the PduP and PduQ enzymes, which reduce NAD(+) and oxidize NADH respectively, although there must also be cofactor transport across the BMC. Its function is as follows. The 1,2-PD-specific bacterial microcompartment (BMC) concentrates low levels of 1,2-PD catabolic enzymes, concentrates volatile reaction intermediates thus enhancing pathway flux and keeps the level of toxic, mutagenic propionaldehyde low. This Salmonella typhimurium (strain LT2 / SGSC1412 / ATCC 700720) protein is 1-propanol dehydrogenase PduQ.